The sequence spans 274 residues: Cytochrome b-c1 complex subunit Rieske, mitochondrial (274 aa).

At 79–103 (SHTDVKVPDFSEYRRPEVLDSTKSS) the chain is on the mitochondrial matrix side. Residues 104–140 (RESSEARKGFSYLVTAVTTVGVAYAAKNAVTQFVSSM) traverse the membrane as a helical segment. Topologically, residues 141-274 (SASADVLALA…FTSDDMVIVG (134 aa)) are mitochondrial intermembrane. One can recognise a Rieske domain in the interval 187 to 272 (EAAVELSQLR…YEFTSDDMVI (86 aa)). [2Fe-2S] cluster contacts are provided by C217, H219, C236, H239, and S241. A disulfide bond links C222 and C238.

This sequence belongs to the Rieske iron-sulfur protein family. As to quaternary structure, component of the ubiquinol-cytochrome c oxidoreductase (cytochrome b-c1 complex, complex III, CIII), a multisubunit enzyme composed of 11 subunits. The complex is composed of 3 respiratory subunits cytochrome b, cytochrome c1 and Rieske protein UQCRFS1, 2 core protein subunits UQCRC1/QCR1 and UQCRC2/QCR2, and 6 low-molecular weight protein subunits UQCRH/QCR6, UQCRB/QCR7, UQCRQ/QCR8, UQCR10/QCR9, UQCR11/QCR10 and subunit 9, the cleavage product of Rieske protein UQCRFS1. The complex exists as an obligatory dimer and forms supercomplexes (SCs) in the inner mitochondrial membrane with NADH-ubiquinone oxidoreductase (complex I, CI) and cytochrome c oxidase (complex IV, CIV), resulting in different assemblies (supercomplex SCI(1)III(2)IV(1) and megacomplex MCI(2)III(2)IV(2)). Incorporation of the Rieske protein UQCRFS1 is the penultimate step in complex III assembly. Interacts with TTC19, which is involved in the clearance of UQCRFS1 fragments. Component of the ubiquinol-cytochrome c oxidoreductase (cytochrome b-c1 complex, complex III, CIII). Subunit 9 corresponds to the mitochondrial targeting sequence (MTS) of Rieske protein UQCRFS1. It is retained after processing and incorporated inside complex III, where it remains bound to the complex and localizes between the 2 core subunits UQCRC1/QCR1 and UQCRC2/QCR2. The cofactor is [2Fe-2S] cluster. Proteolytic processing is necessary for the correct insertion of UQCRFS1 in the complex III dimer. Several fragments are generated during UQCRFS1 insertion, most probably due to the endogenous matrix-processing peptidase (MPP) activity of the 2 core protein subunits UQCRC1/QCR1 and UQCRC2/QCR2, which are homologous to the 2 mitochondrial-processing peptidase (MPP) subunits beta-MPP and alpha-MPP respectively. The action of the protease is also necessary for the clearance of the UQCRFS1 fragments.

Its subcellular location is the mitochondrion inner membrane. It carries out the reaction a quinol + 2 Fe(III)-[cytochrome c](out) = a quinone + 2 Fe(II)-[cytochrome c](out) + 2 H(+)(out). Its function is as follows. Component of the ubiquinol-cytochrome c oxidoreductase, a multisubunit transmembrane complex that is part of the mitochondrial electron transport chain which drives oxidative phosphorylation. The respiratory chain contains 3 multisubunit complexes succinate dehydrogenase (complex II, CII), ubiquinol-cytochrome c oxidoreductase (cytochrome b-c1 complex, complex III, CIII) and cytochrome c oxidase (complex IV, CIV), that cooperate to transfer electrons derived from NADH and succinate to molecular oxygen, creating an electrochemical gradient over the inner membrane that drives transmembrane transport and the ATP synthase. The cytochrome b-c1 complex catalyzes electron transfer from ubiquinol to cytochrome c, linking this redox reaction to translocation of protons across the mitochondrial inner membrane, with protons being carried across the membrane as hydrogens on the quinol. In the process called Q cycle, 2 protons are consumed from the matrix, 4 protons are released into the intermembrane space and 2 electrons are passed to cytochrome c. The Rieske protein is a catalytic core subunit containing a [2Fe-2S] iron-sulfur cluster. It cycles between 2 conformational states during catalysis to transfer electrons from the quinol bound in the Q(0) site in cytochrome b to cytochrome c1. Incorporation of UQCRFS1 is the penultimate step in complex III assembly. Component of the ubiquinol-cytochrome c oxidoreductase (cytochrome b-c1 complex, complex III, CIII). UQCRFS1 undergoes proteolytic processing once it is incorporated in the complex III dimer. One of the fragments, called subunit 9, corresponds to its mitochondrial targeting sequence (MTS). The proteolytic processing is necessary for the correct insertion of UQCRFS1 in the complex III dimer, but the persistence of UQCRFS1-derived fragments may prevent newly imported UQCRFS1 to be processed and assembled into complex III and is detrimental for the complex III structure and function. The protein is Cytochrome b-c1 complex subunit Rieske, mitochondrial (UQCRFS1) of Symphalangus syndactylus (Siamang).